The following is a 485-amino-acid chain: Metalloprotease AprA (485 aa).

Zn(2+) is bound at residue His-187. The active site involves Glu-188. Zn(2+) is bound by residues His-191 and His-197. The Ca(2+) site is built by Arg-268, Gly-270, Thr-272, Asp-300, Gly-302, Gly-303, Asp-305, Thr-342, Glu-344, Gly-349, Gly-351, Asp-353, Asn-358, Leu-360, Asn-362, Gly-366, Gly-367, Ala-368, Gly-369, Asp-371, Gly-375, Gly-376, Gly-377, Gly-378, Asp-380, Gly-384, Gly-385, Thr-386, Gly-387, Asp-389, Asp-398, Asp-405, Asp-415, Asp-461, Thr-463, Asn-465, Ser-467, and Asp-469. Hemolysin-type calcium-binding repeat units follow at residues 347 to 364 (FGGS…ANVL), 365 to 382 (KGGA…ADQL), and 383 to 395 (WGGT…VFGA).

Belongs to the peptidase M10B family. Requires Ca(2+) as cofactor. It depends on Zn(2+) as a cofactor.

It is found in the secreted. Its function is as follows. Secreted protease which is important for P.entomophila to counteract the local immune response of Drosophila. Can degrade antimicrobial peptides (AMPs), e.g. Diptericin and Cecropin A. Thus, protects P.entomophila from the Drosophila antimicrobial peptides produced by the gut innate immune response, and promotes bacterial persistence in the Drosophila gut and killing of the host. Is responsible for maturation of pro-Monalysin to the active toxin Monalysin, by cleaving its N-terminus. This Pseudomonas entomophila (strain L48) protein is Metalloprotease AprA.